The following is a 541-amino-acid chain: Ankyrin repeat domain-containing protein 13C (541 aa).

A compositionally biased stretch (basic and acidic residues) spans 1 to 20; that stretch reads MTGEKIRSLRRDHKPSKEDG. The interval 1–53 is disordered; sequence MTGEKIRSLRRDHKPSKEDGDVLEPCEEEATAALGGAFTGGRSGPGGSGKGGK. A compositionally biased stretch (acidic residues) spans 21 to 30; it reads DVLEPCEEEA. The segment covering 37-52 has biased composition (gly residues); the sequence is AFTGGRSGPGGSGKGG. ANK repeat units follow at residues 111–142, 143–172, and 176–205; these read PSLY…QKDN, HGNT…PVKV, and QGWS…QQSR. Serine 411 is subject to Phosphoserine.

The protein resides in the endoplasmic reticulum membrane. Functionally, acts as a molecular chaperone for G protein-coupled receptors, regulating their biogenesis and exit from the ER. The polypeptide is Ankyrin repeat domain-containing protein 13C (Ankrd13c) (Mus musculus (Mouse)).